Reading from the N-terminus, the 588-residue chain is Adenine deaminase (588 aa).

The protein belongs to the metallo-dependent hydrolases superfamily. Adenine deaminase family. As to quaternary structure, homodimer. The cofactor is Mn(2+).

It carries out the reaction adenine + H2O + H(+) = hypoxanthine + NH4(+). This Shigella sonnei (strain Ss046) protein is Adenine deaminase.